Consider the following 80-residue polypeptide: Serine palmitoyltransferase small subunit B (80 aa).

Over 1-11 (MDVKHIKDYLS) the chain is Cytoplasmic. Residues 12–29 (WLYYQYLLITCSYVLEPW) form a helical membrane-spanning segment. At 30–36 (EQSIFNT) the chain is on the lumenal side. Residues 37-57 (LLLTIIAMVIYSSYIFIPIHV) traverse the membrane as a helical segment. The Cytoplasmic segment spans residues 58-80 (RLAVEFFSGIFGGQHESTVALMS).

It belongs to the SPTSS family. SPTSSB subfamily. As to quaternary structure, component of the serine palmitoyltransferase (SPT) complex, which is composed of SPTLC1, SPTLC2 or SPTLC3 and SPTSSA or SPTSSB. The heterodimer consisting of SPTLC1 and SPTLC2/SPTLC3 forms the catalytic core of the enzyme, while SPTSSA or SPTSSB subunits determine substrate specificity. SPT also interacts with ORMDL proteins, especially ORMDL3, which negatively regulate SPT activity in the presence of ceramides.

The protein localises to the endoplasmic reticulum membrane. It functions in the pathway lipid metabolism; sphingolipid metabolism. Functionally, component of the serine palmitoyltransferase multisubunit enzyme (SPT) that catalyzes the initial and rate-limiting step in sphingolipid biosynthesis by condensing L-serine and activated acyl-CoA (most commonly palmitoyl-CoA) to form long-chain bases. The SPT complex is composed of SPTLC1, SPTLC2 or SPTLC3 and SPTSSA or SPTSSB. Within this complex, the heterodimer consisting of SPTLC1 and SPTLC2/SPTLC3 forms the catalytic core. Within the SPT complex, SPTSSB stimulates the catalytic activity and plays a role in substrate specificity. SPT complexes with this subunit showing a preference for longer acyl-CoAs. The SPTLC1-SPTLC2-SPTSSB complex shows a strong preference for C18-CoA substrate, while the SPTLC1-SPTLC3-SPTSSB isozyme displays an ability to use a broader range of acyl-CoAs, without apparent preference. The polypeptide is Serine palmitoyltransferase small subunit B (sptssb) (Xenopus tropicalis (Western clawed frog)).